The primary structure comprises 310 residues: Proline iminopeptidase (310 aa).

The region spanning 33–290 (PVIFLHGGPG…RVVQAGHRAF (258 aa)) is the AB hydrolase-1 domain. The active-site Nucleophile is the S107. Residue D260 is part of the active site. H287 acts as the Proton donor in catalysis.

This sequence belongs to the peptidase S33 family.

The protein resides in the cytoplasm. The catalysed reaction is Release of N-terminal proline from a peptide.. In terms of biological role, specifically catalyzes the removal of N-terminal proline residues from peptides. The chain is Proline iminopeptidase (pip) from Neisseria meningitidis serogroup A / serotype 4A (strain DSM 15465 / Z2491).